Reading from the N-terminus, the 308-residue chain is Tyrosine recombinase XerD (308 aa).

The 87-residue stretch at 3 to 89 (NGFTRLTEQF…SIHEFHRFAL (87 aa)) folds into the Core-binding (CB) domain. The Tyr recombinase domain maps to 110-301 (TLPDVLTVDE…SPETLIETYL (192 aa)). Residues Arg153, Lys177, His253, Arg256, and His279 contribute to the active site. Tyr288 acts as the O-(3'-phospho-DNA)-tyrosine intermediate in catalysis.

This sequence belongs to the 'phage' integrase family. XerD subfamily. In terms of assembly, forms a cyclic heterotetrameric complex composed of two molecules of XerC and two molecules of XerD.

Its subcellular location is the cytoplasm. Site-specific tyrosine recombinase, which acts by catalyzing the cutting and rejoining of the recombining DNA molecules. The XerC-XerD complex is essential to convert dimers of the bacterial chromosome into monomers to permit their segregation at cell division. It also contributes to the segregational stability of plasmids. This is Tyrosine recombinase XerD from Bifidobacterium longum (strain NCC 2705).